The following is a 299-amino-acid chain: Streptogrisin-B (299 aa).

The signal sequence occupies residues 1 to 38 (MRIKRTSNRSNAARRVRTTAVLAGLAAVAALAVPTANA). The propeptide occupies 39–114 (ETPRTFSANQ…ERTPGKFTKL (76 aa)). Cys128 and Cys148 are joined by a disulfide. Catalysis depends on charge relay system residues His147, Asp177, and Ser255. A disulfide bridge connects residues Cys249 and Cys276.

The protein belongs to the peptidase S1 family. In terms of assembly, monomer.

The catalysed reaction is Hydrolysis of proteins with trypsin-like specificity.. Functionally, has a primary specificity for large aliphatic or aromatic amino acids. In Streptomyces griseus, this protein is Streptogrisin-B (sprB).